The sequence spans 278 residues: Putative transcription factor kapC (278 aa).

The span at 1–10 (MQPALAPAPH) shows a compositional bias: pro residues. The disordered stretch occupies residues 1-121 (MQPALAPAPH…QNRAAQRAFR (121 aa)). Positions 56–68 (PTATTSPRDQNNI) are enriched in polar residues. In terms of domain architecture, bZIP spans 103–166 (PLSTSKRAAQ…EYVINLQSRL (64 aa)). The basic motif stretch occupies residues 104–127 (LSTSKRAAQNRAAQRAFRQRKESY). Residues 109 to 119 (RAAQNRAAQRA) are compositionally biased toward low complexity. The tract at residues 131–162 (LEEQVKEYEVMSQEYKALQAENYQLREYVINL) is leucine-zipper. The tract at residues 173 to 278 (VPELPGNIDL…PPTHGLPMVS (106 aa)) is disordered. Over residues 198–214 (PGQAGASAPPQGSPQSQ) the composition is skewed to low complexity. The segment covering 215 to 226 (VSIANDDMNSLN) has biased composition (polar residues). The segment covering 254 to 269 (GRGDETADPSETKTEP) has biased composition (basic and acidic residues).

This sequence belongs to the bZIP family.

The protein localises to the nucleus. Its function is as follows. Putative transcription factor. The polypeptide is Putative transcription factor kapC (kapC) (Emericella nidulans (strain FGSC A4 / ATCC 38163 / CBS 112.46 / NRRL 194 / M139) (Aspergillus nidulans)).